The chain runs to 495 residues: uncharacterized protein (495 aa).

12 consecutive transmembrane segments (helical) span residues 43 to 63 (IIIS…MPSI), 75 to 95 (TLVV…PLIF), 106 to 126 (PLNI…ALSV), 128 to 148 (LAMF…GLGI), 168 to 188 (IYFL…GFIA), 196 to 216 (WEFW…VVFL), 284 to 304 (PIMI…YLLF), 323 to 343 (GLTY…LLPL), 366 to 386 (PMAF…GWTV), 390 to 410 (VFWF…VMTF), 426 to 446 (ASAM…FPLF), and 461 to 481 (SLLA…YMFG).

The protein belongs to the major facilitator superfamily. CAR1 family.

The protein resides in the membrane. This is an uncharacterized protein from Schizosaccharomyces pombe (strain 972 / ATCC 24843) (Fission yeast).